The following is a 237-amino-acid chain: Phosphoribosylaminoimidazole-succinocarboxamide synthase (237 aa).

It belongs to the SAICAR synthetase family.

The catalysed reaction is 5-amino-1-(5-phospho-D-ribosyl)imidazole-4-carboxylate + L-aspartate + ATP = (2S)-2-[5-amino-1-(5-phospho-beta-D-ribosyl)imidazole-4-carboxamido]succinate + ADP + phosphate + 2 H(+). Its pathway is purine metabolism; IMP biosynthesis via de novo pathway; 5-amino-1-(5-phospho-D-ribosyl)imidazole-4-carboxamide from 5-amino-1-(5-phospho-D-ribosyl)imidazole-4-carboxylate: step 1/2. This is Phosphoribosylaminoimidazole-succinocarboxamide synthase from Serratia proteamaculans (strain 568).